A 334-amino-acid polypeptide reads, in one-letter code: Dual specificity mitogen-activated protein kinase kinase 6 (334 aa).

Residues 1 to 11 (MSQSKGKKRNP) show a composition bias toward basic residues. The tract at residues 1–34 (MSQSKGKKRNPGLKIPKEAFEQPQTSSTPPRDLD) is disordered. Residues 4 to 19 (SKGKKRNPGLKIPKEA) are d domain. Residues 53–314 (LEPIMELGRG…YPELMQHPFF (262 aa)) enclose the Protein kinase domain. ATP-binding positions include 59 to 67 (LGRGAYGVV) and K82. D179 acts as the Proton acceptor in catalysis. (Microbial infection) O-acetylserine; by Yersinia YopJ; alternate is present on S207. Phosphoserine; by MAP3K; alternate is present on S207. Position 211 is a (Microbial infection) O-acetylthreonine; by Yersinia YopJ; alternate (T211). T211 carries the phosphothreonine; by MAP3K; alternate modification. Positions 311–334 (HPFFTLHESKGTDVASFVKLILGD) are DVD domain.

Belongs to the protein kinase superfamily. STE Ser/Thr protein kinase family. MAP kinase kinase subfamily. Dimer. Interacts (via its D domain) with its substrates MAPK11, MAPK12, MAPK13 and MAPK14. Interacts (via its DVD domain) with MAP3Ks activators like MAP3K5/ASK1, MAP3K1/MEKK1, MAP3K2/MEKK2, MAP3K3/MEKK3, MAP3K4/MEKK4, MAP3K7/TAK1, MAP3K11/MLK3 and MAP3K17/TAOK2. Interacts with DCTN1. Interacts with EIF2AK2/PKR. As to quaternary structure, (Microbial infection) Interacts with Yersinia YopJ. In terms of processing, weakly autophosphorylated. Phosphorylated at Ser-207 and Thr-211 by the majority of M3Ks, such as MAP3K5/ASK1, MAP3K1/MEKK1, MAP3K2/MEKK2, MAP3K3/MEKK3, MAP3K4/MEKK4, MAP3K7/TAK1, MAP3K11/MLK3 and MAP3K17/TAOK2. Post-translationally, in response to genotoxic stress, MAP3K-phosphorylated MAP2K6 is ubiquitinated and degraded by the SCF(FBXO31) complex. (Microbial infection) Acetylation of Ser-207 and Thr-211 by Yersinia YopJ prevents phosphorylation and activation, thus blocking the MAPK signaling pathway. Isoform 2 is only expressed in skeletal muscle. Isoform 1 is expressed in skeletal muscle, heart, and in lesser extent in liver or pancreas.

It is found in the nucleus. Its subcellular location is the cytoplasm. The protein localises to the cytoskeleton. It carries out the reaction L-seryl-[protein] + ATP = O-phospho-L-seryl-[protein] + ADP + H(+). It catalyses the reaction L-threonyl-[protein] + ATP = O-phospho-L-threonyl-[protein] + ADP + H(+). The catalysed reaction is L-tyrosyl-[protein] + ATP = O-phospho-L-tyrosyl-[protein] + ADP + H(+). With respect to regulation, activated by dual phosphorylation on Ser-207 and Thr-211 in response to a variety of cellular stresses, including UV radiation, osmotic shock, hypoxia, inflammatory cytokines, interferon gamma (IFNG), and less often by growth factors. MAP2K6/MKK6 is activated by the majority of M3Ks, such as MAP3K5/ASK1, MAP3K1/MEKK1, MAP3K2/MEKK2, MAP3K3/MEKK3, MAP3K4/MEKK4, MAP3K7/TAK1, MAP3K11/MLK3 and MAP3K17/TAOK2. In terms of biological role, dual specificity protein kinase which acts as an essential component of the MAP kinase signal transduction pathway. With MAP3K3/MKK3, catalyzes the concomitant phosphorylation of a threonine and a tyrosine residue in the MAP kinases p38 MAPK11, MAPK12, MAPK13 and MAPK14 and plays an important role in the regulation of cellular responses to cytokines and all kinds of stresses. Especially, MAP2K3/MKK3 and MAP2K6/MKK6 are both essential for the activation of MAPK11 and MAPK13 induced by environmental stress, whereas MAP2K6/MKK6 is the major MAPK11 activator in response to TNF. MAP2K6/MKK6 also phosphorylates and activates PAK6. The p38 MAP kinase signal transduction pathway leads to direct activation of transcription factors. Nuclear targets of p38 MAP kinase include the transcription factors ATF2 and ELK1. Within the p38 MAPK signal transduction pathway, MAP3K6/MKK6 mediates phosphorylation of STAT4 through MAPK14 activation, and is therefore required for STAT4 activation and STAT4-regulated gene expression in response to IL-12 stimulation. The pathway is also crucial for IL-6-induced SOCS3 expression and down-regulation of IL-6-mediated gene induction; and for IFNG-dependent gene transcription. Has a role in osteoclast differentiation through NF-kappa-B transactivation by TNFSF11, and in endochondral ossification and since SOX9 is another likely downstream target of the p38 MAPK pathway. MAP2K6/MKK6 mediates apoptotic cell death in thymocytes. Acts also as a regulator for melanocytes dendricity, through the modulation of Rho family GTPases. The chain is Dual specificity mitogen-activated protein kinase kinase 6 (MAP2K6) from Homo sapiens (Human).